The following is a 364-amino-acid chain: MAALYPALTPEQKKELAEIAQRIVSNGKGILAADESTGTMGKRLSAIKVENVDENRRVYRQLLFSSDPSVTKAIGGVIFYEETLYQKTDDGTPFVKLIKDRGIVVGIKVDKGTVPLAGTDGESTTQGLDGLAERCARYKKDGADFAKWRCVLKISKNTPSALAIAENANVLARYASICQQNGLVPIVEPEILPDGDHDLKTCQYVTEKVLAATYKALSDHHVYLEGSLLKPNMVTAGQASKIRCSPQEVAMATVTALRRTVPSAVPGITFLSGGQSEEDASLNLNAINQLPLERPWALSFSYGRALQASVLKAWAGAPANIPAAKKEFEKRAAINGLAAQGKYVPAGSSGSAASESLFIANHNY.

Residues R56 and K147 each coordinate substrate. K230 functions as the Schiff-base intermediate with dihydroxyacetone-P in the catalytic mechanism.

The protein belongs to the class I fructose-bisphosphate aldolase family. Homotetramer. Expressed mainly in the liver and also in brain and other tissues, except for the heart muscle.

It catalyses the reaction beta-D-fructose 1,6-bisphosphate = D-glyceraldehyde 3-phosphate + dihydroxyacetone phosphate. Its pathway is carbohydrate degradation; glycolysis; D-glyceraldehyde 3-phosphate and glycerone phosphate from D-glucose: step 4/4. This Lethenteron camtschaticum (Japanese lamprey) protein is Fructose-bisphosphate aldolase, non-muscle type.